The chain runs to 368 residues: Heme A synthase (368 aa).

The next 5 helical transmembrane spans lie at 14–34 (AVRIWLTLVAALIAVMVLVGG), 104–124 (VIGIVYLLPFLWFLWRGAIGP), 129–149 (ALWIIFALGALQGAVGWWMVA), 161–181 (VRLATHLSLALIIYAAIVWTL), and 200–220 (ALALLGLTFVQLYAGALVAGL). Position 264 (His-264) interacts with heme. 3 consecutive transmembrane segments (helical) span residues 266–283 (MLAYALWTLAALHMIDAL), 296–316 (FLALTAQATLGIFTVLYAAPI), and 318–338 (LALVHQAMALVVLTLAVLQAE). His-322 provides a ligand contact to heme.

Belongs to the COX15/CtaA family. Type 2 subfamily. In terms of assembly, interacts with CtaB. Heme b serves as cofactor.

The protein localises to the cell membrane. The catalysed reaction is Fe(II)-heme o + 2 A + H2O = Fe(II)-heme a + 2 AH2. It functions in the pathway porphyrin-containing compound metabolism; heme A biosynthesis; heme A from heme O: step 1/1. Catalyzes the conversion of heme O to heme A by two successive hydroxylations of the methyl group at C8. The first hydroxylation forms heme I, the second hydroxylation results in an unstable dihydroxymethyl group, which spontaneously dehydrates, resulting in the formyl group of heme A. The chain is Heme A synthase from Rhodopseudomonas palustris (strain ATCC BAA-98 / CGA009).